Here is a 131-residue protein sequence, read N- to C-terminus: Small ribosomal subunit protein uS8 (131 aa).

Belongs to the universal ribosomal protein uS8 family. In terms of assembly, part of the 30S ribosomal subunit. Contacts proteins S5 and S12.

Functionally, one of the primary rRNA binding proteins, it binds directly to 16S rRNA central domain where it helps coordinate assembly of the platform of the 30S subunit. In Bacteroides fragilis (strain ATCC 25285 / DSM 2151 / CCUG 4856 / JCM 11019 / LMG 10263 / NCTC 9343 / Onslow / VPI 2553 / EN-2), this protein is Small ribosomal subunit protein uS8.